The primary structure comprises 320 residues: MAEVVAVDVGATWVRMAIVRGGVIEAIKRERNPGTEEGLERVLQGLAEGLGIDRGRVEKVGAASIGPLDLRRGYIVGSPNIKSHIVRLSTILKRLFPKSKVAIANDAVAAAWGEYLLGRLAGTPDLGYITMSTGVGGGFVVGGRLLLGSRGNAHEVGHIVVDMGWEGGRCGCGGTGHWEAIAGGRWIPRTSSVLARGWRGPETSLYRAALEGRVGSAREVFEAAAVGDDFALHVIDYIARASAAGIASVKAAYDVDAVIIGGSVYLNNRRMLRPLIERHLAAYAPFSSRIEVVDASFGDNEGVMGAYAIAYRNPEDLPIF.

The protein belongs to the ROK (NagC/XylR) family. As to quaternary structure, monomer. A divalent metal cation is required as a cofactor.

It catalyses the reaction D-glucose + ATP = D-glucose 6-phosphate + ADP + H(+). Catalyzes the phosphorylation of D-glucose to D-glucose 6-phosphate using ATP as the phosphate donor. ITP can also serve as an effective phosphoryl donor. According to Hansen et al., the enzyme has a broad hexose specificity, and in addition to glucose, which shows the highest catalytic efficiency, it can also phosphorylate fructose, mannose, glucosamine, N-acetylglucosamine, N-acetylmannosamine and 2-deoxyglucose. However, according to Sakuraba et al., the enzyme shows strict specificity for D-glucose. The chain is Glucokinase from Aeropyrum pernix (strain ATCC 700893 / DSM 11879 / JCM 9820 / NBRC 100138 / K1).